Reading from the N-terminus, the 1080-residue chain is Myocardin-related transcription factor B (1080 aa).

The RPEL 1 repeat unit spans residues 40-65 (EVLQLRLQQRRTREQLVDQGIMPPLK). S66 carries the post-translational modification Phosphoserine. RPEL repeat units follow at residues 84–109 (NFLK…EETF) and 128–153 (DDLN…PVDS). Disordered regions lie at residues 170–222 (THGE…AQFT), 234–311 (TPLT…EPQM), 352–384 (PIKT…SSLD), and 477–501 (PHVE…LSTD). Composition is skewed to polar residues over residues 188–200 (QPAS…SAAS) and 240–259 (QPPT…SSAK). Basic and acidic residues predominate over residues 272–287 (NPNDKHRSKKCKDPKP). Positions 358–370 (NSSSGSNSGSSSS) are enriched in low complexity. Positions 383–417 (LDDLKVSELKTELKLRGLPVSGTKPDLIERLKPYQ) constitute an SAP domain. S531, S535, and S537 each carry phosphoserine. A coiled-coil region spans residues 539-594 (SSSTLSTLELDAAEKDRKLQEKEKQIEELKRKLEQEQKLVEVLKMQLEVEKRGQQR). Positions 557 to 585 (LQEKEKQIEELKRKLEQEQKLVEVLKMQL) are required for interaction with itself and with MRTFA. Disordered stretches follow at residues 588 to 646 (EKRG…SVGQ) and 794 to 846 (LQYQ…PQQF). Pro residues predominate over residues 595 to 606 (PPDPQPSDPPHP). A Glycyl lysine isopeptide (Lys-Gly) (interchain with G-Cter in SUMO1) cross-link involves residue K622. The span at 794-821 (LQYQRQPGPTNQQPFVSKTSNPALQSRT) shows a compositional bias: polar residues. S913 is subject to Phosphoserine. The segment at 969–988 (GTLPSATDTGPLQNSSEDRE) is disordered. Residues 972-983 (PSATDTGPLQNS) are compositionally biased toward polar residues.

In terms of assembly, interacts with MRTFA and SRF. In terms of processing, O-glycosylated. As to expression, widely expressed. High expression in heart, brain and testis. Lower expression in lung, liver and kidney.

The protein localises to the nucleus. Functionally, acts as a transcriptional coactivator of serum response factor (SRF). Required for skeletal myogenic differentiation. This chain is Myocardin-related transcription factor B (Mrtfb), found in Mus musculus (Mouse).